The following is a 1028-amino-acid chain: Contactin-6 (1028 aa).

A signal peptide spans 1-19 (MRLLWKLVILLPLINSCAG). 6 Ig-like C2-type domains span residues 32–117 (PQDV…AKLQ), 122–208 (EDFE…RSVQ), 227–308 (PKIE…RNLA), 318–402 (PEWE…AELR), 408–495 (PDFS…GSLI), and 499–587 (RTVI…ERLS). 6 disulfides stabilise this stretch: Cys50–Cys100, Cys144–Cys196, Cys249–Cys297, Cys339–Cys386, Cys431–Cys479, and Cys521–Cys577. N-linked (GlcNAc...) asparagine glycosylation is found at Asn65 and Asn193. 3 N-linked (GlcNAc...) asparagine glycosylation sites follow: Asn368, Asn377, and Asn468. 4 consecutive Fibronectin type-III domains span residues 600–698 (PPED…TKAS), 703–800 (APVN…SGED), 805–901 (APRG…TKKS), and 902–996 (PPSQ…KMSS). N-linked (GlcNAc...) asparagine glycosylation is found at Asn659, Asn765, Asn860, and Asn865. Tyr882 is subject to Phosphotyrosine. The span at 887–902 (TGPSSPPVNVTTKKSP) shows a compositional bias: polar residues. Residues 887–908 (TGPSSPPVNVTTKKSPPSQPPA) are disordered. N-linked (GlcNAc...) asparagine glycans are attached at residues Asn895, Asn931, Asn956, and Asn957. Ser999 carries the GPI-anchor amidated serine lipid modification. Positions 1000-1028 (VGVQILKPSTQFLTMVGFFYCFVIQPLSR) are cleaved as a propeptide — removed in mature form.

It belongs to the immunoglobulin superfamily. Contactin family. Interacts with PTPRG. Specifically expressed in neuronal cells. In brain, it is expressed in spinal cord, cerebrum and cerebellum. At 17 dpc, it is expressed in hippocampus, cerebellum, and the brain stem. Strongly expressed after birth with a maximum level between P1 and P21, which corresponds to the time frame of oligodendrogliogenesis.

The protein localises to the cell membrane. Functionally, contactins mediate cell surface interactions during nervous system development. Participates in oligodendrocytes generation by acting as a ligand of NOTCH1. Its association with NOTCH1 promotes NOTCH1 activation through the released notch intracellular domain (NICD) and subsequent translocation to the nucleus. May be involved in motor coordination. The sequence is that of Contactin-6 (Cntn6) from Rattus norvegicus (Rat).